Reading from the N-terminus, the 1055-residue chain is MQPEEGTGWLLELLSEVQLQQYFLRLRDDLNITRLSHFEYVKNEDLEKIGMGRPGQRRLWEAVKRRKAMCKRKSWMSKVFSGKRLEAEFPSQHSQSTFRKPSPTPGSLPGEGTLQSLTCLIGEKDLRLLEKLGDGSFGVVRRGEWDAPAGKTVSVAVKCLKPDVLSQPEAMDDFIREVNAMHSLDHRNLIRLYGVVLTLPMKMVTELAPLGSLLDRLRKHQGHFLLGTLSRYAVQVAEGMAYLESKRFIHRDLAARNLLLATRDLVKIGDFGLMRALPQNDDHYVMQEHRKVPFAWCAPESLKTRTFSHASDTWMFGVTLWEMFTYGQEPWIGLNGSQILHKIDKEGERLPRPEDCPQDIYNVMVQCWAHKPEDRPTFVALRDFLLEAQPTDMRALQDFEEPDKLHIQMNDVITVIEGRAENYWWRGQNTRTLCVGPFPRNVVTSVAGLSAQDISQPLQNSFIHTGHGDSDPRHCWGFPDRIDELYLGNPMDPPDLLSVELSTSRPTQHLGRVKREPPPRPPQPAIFTQKTTYDPVSEDPDPLSSDFKRLGLRKPALPRGLWLAKPSARVPGTKADRSSGGEVTLIDFGEEPVVPTPRPCAPSLAQLAMDACSLLDKTPPQSPTRALPRPLHPTPVVDWDARPLPPPPAYDDVAQDEDDFEVCSINSTLVGAGLPAGPSQGETNYAFVPEQAQMPPALEDNLFLPPQGGGKPPSSVQTAEIFQALQQECMRQLQVPTGQLTPSPTPGGDDKPQVPPRVPIPPRPTRPRVELSPAPSGEEETSRWPGPASPPRVPPREPLSPQGSRTPSPLVPPGSSPLPHRLSSSPGKTMPTTQSFASDPKYATPQVIQAPGPRAGPCILPIVRDGRKVSSTHYYLLPERPPYLERYQRFLREAQSPEEPAALPVPPLLPPPSTPAPAAPTATVRPMPQAAPDPKANFSTNNSNPGARPPSLRAAARLPQRGCPGDGQEAARPADKVQMLQAMVHGVTTEECQAALQSHSWSVQRAAQYLKVEQLFGLGLRPRVECHKVLEMFDWNLEQAGCHLLGSCGPAHHKR.

Residues 1–110 (MQPEEGTGWL…PSPTPGSLPG (110 aa)) are SAM-like domain. The disordered stretch occupies residues 91 to 110 (SQHSQSTFRKPSPTPGSLPG). T113 bears the Phosphothreonine mark. A Protein kinase domain is found at 126–385 (LRLLEKLGDG…PTFVALRDFL (260 aa)). ATP-binding positions include 132 to 140 (LGDGSFGVV) and K158. The Proton acceptor role is filled by D252. The residue at position 284 (Y284) is a Phosphotyrosine; by SRC and autocatalysis. The SH3 domain occupies 388–448 (AQPTDMRALQ…PRNVVTSVAG (61 aa)). The CRIB domain maps to 454–466 (ISQPLQNSFIHTG). Positions 505-548 (RPTQHLGRVKREPPPRPPQPAIFTQKTTYDPVSEDPDPLSSDFK) are disordered. Phosphotyrosine occurs at positions 518 and 533. A required for interaction with SRC region spans residues 638–667 (DWDARPLPPPPAYDDVAQDEDDFEVCSINS). Positions 647-650 (PPAY) are required for interaction with NEDD4. The interval 737–855 (TGQLTPSPTP…QVIQAPGPRA (119 aa)) is disordered. The interval 748–891 (GDDKPQVPPR…PYLERYQRFL (144 aa)) is EBD domain. 2 stretches are compositionally biased toward pro residues: residues 753–764 (QVPPRVPIPPRP) and 787–798 (PASPPRVPPREP). Positions 817 to 827 (PLPHRLSSSPG) are enriched in low complexity. Y842 carries the phosphotyrosine modification. Position 854 is an omega-N-methylarginine (R854). Y874 and Y887 each carry phosphotyrosine. S896 is subject to Phosphoserine. The segment at 896–952 (SPEEPAALPVPPLLPPPSTPAPAAPTATVRPMPQAAPDPKANFSTNNSNPGARPPSL) is disordered. Pro residues predominate over residues 903 to 918 (LPVPPLLPPPSTPAPA). The UBA domain occupies 973–1013 (PADKVQMLQAMVHGVTTEECQAALQSHSWSVQRAAQYLKVE).

Belongs to the protein kinase superfamily. Tyr protein kinase family. As to quaternary structure, homodimer. Interacts with CSPG4 (activated). Interacts with MERTK (activated); stimulates autophosphorylation. May interact (phosphorylated) with HSP90AB1; maintains kinase activity. Interacts with NPHP1. Interacts with SNX9 (via SH3 domain). Interacts with SRC (via SH2 and SH3 domain). Part of a collagen stimulated complex involved in cell migration composed of CDC42, CRK, TNK2 and BCAR1/p130cas. Interacts with BCAR1/p130cas via SH3 domains. Forms complexes with GRB2 and numerous receptor tyrosine kinases (RTK) including LTK, AXL or PDGFRL, in which GRB2 promotes RTK recruitment by TNK2. Interacts with CDC42. Interacts with EGFR, and this interaction is dependent on EGF stimulation and kinase activity of EGFR. Interacts (via kinase domain) with AKT1. Interacts with NEDD4 (via WW3 domain). NEDD4L and EGF promote association with NEDD4. Mg(2+) is required as a cofactor. Post-translationally, autophosphorylation regulates kinase activity. Phosphorylation on Tyr-533 is required for interaction with SRC and is observed during association with clathrin-coated pits. Polyubiquitinated by NEDD4 and NEDD4L. Degradation can be induced by EGF and is lysosome-dependent. Ubiquitously present in all tissues tested. Highly expressed in the adult central nervous system (CNS); hippocampus, neocortex, and cerebellum, both at dendritic spines and presynaptic axon terminals. Levels are strongly increased during enhanced neural activity.

The protein resides in the cell membrane. It is found in the nucleus. It localises to the endosome. The protein localises to the cell junction. Its subcellular location is the adherens junction. The protein resides in the cytoplasmic vesicle membrane. It is found in the cytoplasmic vesicle. It localises to the clathrin-coated vesicle. The protein localises to the membrane. Its subcellular location is the clathrin-coated pit. The protein resides in the cytoplasm. It is found in the cytosol. The catalysed reaction is L-tyrosyl-[protein] + ATP = O-phospho-L-tyrosyl-[protein] + ADP + H(+). It catalyses the reaction L-seryl-[protein] + ATP = O-phospho-L-seryl-[protein] + ADP + H(+). It carries out the reaction L-threonyl-[protein] + ATP = O-phospho-L-threonyl-[protein] + ADP + H(+). Its function is as follows. Non-receptor tyrosine-protein and serine/threonine-protein kinase that is implicated in cell spreading and migration, cell survival, cell growth and proliferation. Transduces extracellular signals to cytosolic and nuclear effectors. Phosphorylates AKT1, AR, MCF2, WASL and WWOX. Implicated in trafficking and clathrin-mediated endocytosis through binding to epidermal growth factor receptor (EGFR) and clathrin. Binds to both poly- and mono-ubiquitin and regulates ligand-induced degradation of EGFR, thereby contributing to the accumulation of EGFR at the limiting membrane of early endosomes. Downstream effector of CDC42 which mediates CDC42-dependent cell migration via phosphorylation of BCAR1. May be involved both in adult synaptic function and plasticity and in brain development. Activates AKT1 by phosphorylating it on 'Tyr-176'. Phosphorylates AR on 'Tyr-267' and 'Tyr-363' thereby promoting its recruitment to androgen-responsive enhancers (AREs). Phosphorylates WWOX on 'Tyr-287'. Phosphorylates MCF2, thereby enhancing its activity as a guanine nucleotide exchange factor (GEF) toward Rho family proteins. Contributes to the control of AXL receptor levels. Confers metastatic properties on cancer cells and promotes tumor growth by negatively regulating tumor suppressor such as WWOX and positively regulating pro-survival factors such as AKT1 and AR. The sequence is that of Activated CDC42 kinase 1 (Tnk2) from Mus musculus (Mouse).